Reading from the N-terminus, the 174-residue chain is Crossover junction endodeoxyribonuclease RuvC (174 aa).

Catalysis depends on residues Asp-8, Glu-67, and Asp-139. Mg(2+) contacts are provided by Asp-8, Glu-67, and Asp-139.

Belongs to the RuvC family. In terms of assembly, homodimer which binds Holliday junction (HJ) DNA. The HJ becomes 2-fold symmetrical on binding to RuvC with unstacked arms; it has a different conformation from HJ DNA in complex with RuvA. In the full resolvosome a probable DNA-RuvA(4)-RuvB(12)-RuvC(2) complex forms which resolves the HJ. Mg(2+) serves as cofactor.

The protein resides in the cytoplasm. It catalyses the reaction Endonucleolytic cleavage at a junction such as a reciprocal single-stranded crossover between two homologous DNA duplexes (Holliday junction).. The RuvA-RuvB-RuvC complex processes Holliday junction (HJ) DNA during genetic recombination and DNA repair. Endonuclease that resolves HJ intermediates. Cleaves cruciform DNA by making single-stranded nicks across the HJ at symmetrical positions within the homologous arms, yielding a 5'-phosphate and a 3'-hydroxyl group; requires a central core of homology in the junction. The consensus cleavage sequence is 5'-(A/T)TT(C/G)-3'. Cleavage occurs on the 3'-side of the TT dinucleotide at the point of strand exchange. HJ branch migration catalyzed by RuvA-RuvB allows RuvC to scan DNA until it finds its consensus sequence, where it cleaves and resolves the cruciform DNA. This chain is Crossover junction endodeoxyribonuclease RuvC, found in Pseudoalteromonas translucida (strain TAC 125).